The primary structure comprises 369 residues: Protein FAM187B (369 aa).

The signal sequence occupies residues 1–17; it reads MPPMLWLLLHFAAPALG. The Extracellular segment spans residues 18–335; sequence FYFSISCPSG…RADSVLKGLK (318 aa). 3 N-linked (GlcNAc...) asparagine glycosylation sites follow: Asn45, Asn68, and Asn130. The helical transmembrane segment at 336 to 356 threads the bilayer; it reads LVLLVVTVLALLGALLKCIHP. Topologically, residues 357–369 are cytoplasmic; sequence SPGRRSTQVLVVK.

Belongs to the FAM187 family.

The protein localises to the membrane. The polypeptide is Protein FAM187B (FAM187B) (Homo sapiens (Human)).